Reading from the N-terminus, the 255-residue chain is ParA family protein TC_0871 (255 aa).

Belongs to the ParA family.

The polypeptide is ParA family protein TC_0871 (Chlamydia muridarum (strain MoPn / Nigg)).